Reading from the N-terminus, the 848-residue chain is Neuroligin-3 (848 aa).

The N-terminal stretch at 1 to 37 (MWLRLGPPSLSLSPKPTVGRSLCLTLWFLSLALRAST) is a signal peptide. The Extracellular portion of the chain corresponds to 38 to 709 (QAPAPTVNTH…NPRDYSTELS (672 aa)). Asn98 carries N-linked (GlcNAc...) asparagine glycosylation. Cys106 and Cys141 form a disulfide bridge. Residues 170-195 (RKGGSGAKKQGEDLADNDGDEDEDIR) form a disordered region. Acidic residues predominate over residues 182–194 (DLADNDGDEDEDI). Disulfide bonds link Cys340–Cys351 and Cys510–Cys544. Asn545 is a glycosylation site (N-linked (GlcNAc...) asparagine). Composition is skewed to polar residues over residues 645–656 (TKVPPPDTTHSS) and 677–689 (AYSN…SWNG). The tract at residues 645–694 (TKVPPPDTTHSSHITRRPNGKTWSTKRPAISPAYSNENAQGSWNGDQDAG) is disordered. Residues 710 to 730 (VTIAVGASLLFLNVLAFAALY) traverse the membrane as a helical segment. Residues 731-848 (YRKDKRRQEP…LPHSHSTTRV (118 aa)) are Cytoplasmic-facing. Position 745 is a phosphoserine (Ser745). Tyr792 carries the post-translational modification Phosphotyrosine.

It belongs to the type-B carboxylesterase/lipase family. Homodimer, and heterodimer with NLGN1 and NLGN2. Interacts with neurexins NRXN1, NRXN2 and NRXN3. Interaction with neurexins is mediated by heparan sulfate glycan modification on neurexin. Interacts (via its C-terminus) with DLG4/PSD-95 (via PDZ domain 3). Expressed in the blood vessel walls (at protein level). Detected in throughout the brain and in spinal cord. Detected in brain, and at lower levels in pancreas islet beta cells.

The protein localises to the cell membrane. It is found in the synapse. In terms of biological role, cell surface protein involved in cell-cell-interactions via its interactions with neurexin family members. Plays a role in synapse function and synaptic signal transmission, and may mediate its effects by clustering other synaptic proteins. May promote the initial formation of synapses, but is not essential for this. May also play a role in glia-glia or glia-neuron interactions in the developing peripheral nervous system. The sequence is that of Neuroligin-3 (NLGN3) from Homo sapiens (Human).